A 341-amino-acid polypeptide reads, in one-letter code: Transcription factor ETV7 (341 aa).

One can recognise a PNT domain in the interval 33–117 (NLLGEGGICK…ELLQYIKTQR (85 aa)). The ETS DNA-binding region spans 224–305 (RLLWDYVYQL…PGQKLLFRFL (82 aa)). The interval 315–341 (KHSHLEPLESQEQDRIEFKDKRPEISP) is disordered.

The protein belongs to the ETS family. In terms of tissue distribution, expressed in hematopoietic tissues.

It localises to the nucleus. In terms of biological role, transcriptional repressor; binds to the DNA sequence 5'-CCGGAAGT-3'. Isoform A does not seem to have a repressor activity. Isoform C does not seem to have a repressor activity. This is Transcription factor ETV7 (ETV7) from Homo sapiens (Human).